Consider the following 719-residue polypeptide: Potassium channel KOR2 (719 aa).

Over 1–63 (MAEEYELNEI…VIHPNGRWYR (63 aa)) the chain is Cytoplasmic. Residues 64–84 (IWANMMFLWSIYSTFFTPFEF) form a helical membrane-spanning segment. At 85–93 (SFFRGLPDQ) the chain is on the extracellular side. The helical transmembrane segment at 94 to 114 (LLDLECVQLVFLADVAVHFFL) threads the bilayer. At 115–137 (AYRDPHTYRMVHDKRHIALRYIK) the chain is on the cytoplasmic side. A helical transmembrane segment spans residues 138 to 158 (GSFALDVLGCFPWDAIYKVTG). The Extracellular segment spans residues 159 to 164 (RVEAVR). A helical; Voltage-sensor membrane pass occupies residues 165-185 (WLVWVRLYRGRKVMAFFKRVE). Residues 186-199 (KDIRVSYLLTRIVK) are Cytoplasmic-facing. The helical transmembrane segment at 200–220 (LITVELYCTHTAACGFYYLAT) threads the bilayer. The Extracellular segment spans residues 221 to 255 (TLPPAREGGTWIGSLSLGDARYINFREVDLLTRYV). The pore-forming intramembrane region spans 256–275 (TSLYLAIVTMATVGYGDIHA). At 276–285 (VNTREMAFTV) the chain is on the extracellular side. The chain crosses the membrane as a helical span at residues 286–306 (VYISFSIVLSAYLIGNMTALI). At 307–719 (VKGSRTERFR…LEQARTVATN (413 aa)) the chain is on the cytoplasmic side. 383–503 (LFRGCSDDFL…SQILSNLLKG (121 aa)) lines the a nucleoside 3',5'-cyclic phosphate pocket. 5 ANK repeats span residues 523-556 (KQES…DPSK), 560-589 (DGRT…NVNS), 593-622 (FGNS…ILNL), 624-653 (DAGG…SPNC), and 657-686 (DQRT…DIQA).

This sequence belongs to the potassium channel family. Plant (TC 1.A.1.4) subfamily.

It localises to the membrane. Functionally, probable outward-rectifying potassium channel. This Oryza sativa subsp. japonica (Rice) protein is Potassium channel KOR2.